The sequence spans 354 residues: Homer protein homolog 1 (354 aa).

In terms of domain architecture, WH1 spans 1–110 (MGEQPIFSTR…EKFQEFKEAA (110 aa)). Gly2 bears the N-acetylglycine mark. Residues 114–172 (KEKSQEKMELTSTPSQESAGGDLQSPLTPESINGTDDERTPDLTQNSEPRPEPTQNALP) are disordered. Polar residues-rich tracts occupy residues 138–147 (SPLTPESING) and 155–172 (DLTQ…NALP). Residues 181–352 (KHWEAELATL…LRDNLAKLLE (172 aa)) adopt a coiled-coil conformation. The required for tetramerization stretch occupies residues 290 to 354 (KLQEVEIRNK…DNLAKLLERS (65 aa)). Ser306 carries the phosphoserine modification.

This sequence belongs to the Homer family. In terms of assembly, tetramer; this tetrameric structure is critical for forming the high-order complex with SHANK1, which in turn is necessary for the structural and functional integrity of dendritic spines. Interacts with GRM1, GRM5, ITPR1, DNM3, RYR1, RYR2 and SHANK3. Interacts with IFT57 and OPHN1. Encodes a coiled-coil structure that mediates homo- and heteromultimerization. Interacts with SHANK1; forms high-order polymerized complex with a mesh-like network structure, at least composed of SHANK1, HOMER1 and DLGAP1; the complex formation is SHANK1 multimerization dependent. Interacts with NFATC4. Interacts with DAGLA (via PPXXF motif); this interaction is required for the cell membrane localization of DAGLA. Interacts with SRGAP2.

The protein resides in the cytoplasm. The protein localises to the postsynaptic density. It localises to the synapse. It is found in the cell projection. Its subcellular location is the dendritic spine. Postsynaptic density scaffolding protein. Binds and cross-links cytoplasmic regions of GRM1, GRM5, ITPR1, DNM3, RYR1, RYR2, SHANK1 and SHANK3. By physically linking GRM1 and GRM5 with ER-associated ITPR1 receptors, it aids the coupling of surface receptors to intracellular calcium release. May also couple GRM1 to PI3 kinase through its interaction with AGAP2. Forms a high-order complex with SHANK1, which in turn is necessary for the structural and functional integrity of dendritic spines. Negatively regulates T cell activation by inhibiting the calcineurin-NFAT pathway. Acts by competing with calcineurin/PPP3CA for NFAT protein binding, hence preventing NFAT activation by PPP3CA. The polypeptide is Homer protein homolog 1 (Bos taurus (Bovine)).